The chain runs to 286 residues: Acetyl-coenzyme A carboxylase carboxyl transferase subunit beta (286 aa).

The CoA carboxyltransferase N-terminal domain occupies 26-286 (LWEKCVKCDA…LAKFTRRAAV (261 aa)). Zn(2+) contacts are provided by cysteine 30, cysteine 33, cysteine 49, and cysteine 52. The C4-type zinc finger occupies 30–52 (CVKCDAVLYKPELEKNLDVCPKC).

Belongs to the AccD/PCCB family. Acetyl-CoA carboxylase is a heterohexamer composed of biotin carboxyl carrier protein (AccB), biotin carboxylase (AccC) and two subunits each of ACCase subunit alpha (AccA) and ACCase subunit beta (AccD). Zn(2+) is required as a cofactor.

The protein localises to the cytoplasm. The catalysed reaction is N(6)-carboxybiotinyl-L-lysyl-[protein] + acetyl-CoA = N(6)-biotinyl-L-lysyl-[protein] + malonyl-CoA. It participates in lipid metabolism; malonyl-CoA biosynthesis; malonyl-CoA from acetyl-CoA: step 1/1. Functionally, component of the acetyl coenzyme A carboxylase (ACC) complex. Biotin carboxylase (BC) catalyzes the carboxylation of biotin on its carrier protein (BCCP) and then the CO(2) group is transferred by the transcarboxylase to acetyl-CoA to form malonyl-CoA. This is Acetyl-coenzyme A carboxylase carboxyl transferase subunit beta from Cellvibrio japonicus (strain Ueda107) (Pseudomonas fluorescens subsp. cellulosa).